Consider the following 334-residue polypeptide: Protein-methionine-sulfoxide reductase catalytic subunit MsrP (334 aa).

The segment at residues 1-44 (MKKNQFLKESDVTAESVFFMKRRQVLKALGISAAALSLPHAAHA) is a signal peptide (tat-type signal). Mo-molybdopterin is bound by residues Asn88, 91–92 (YE), Cys146, Thr181, Asn233, Arg238, and 249–251 (GIK).

The protein belongs to the MsrP family. Heterodimer of a catalytic subunit (MsrP) and a heme-binding subunit (MsrQ). It depends on Mo-molybdopterin as a cofactor. Predicted to be exported by the Tat system. The position of the signal peptide cleavage has not been experimentally proven.

It localises to the periplasm. It catalyses the reaction L-methionyl-[protein] + a quinone + H2O = L-methionyl-(S)-S-oxide-[protein] + a quinol. It carries out the reaction L-methionyl-[protein] + a quinone + H2O = L-methionyl-(R)-S-oxide-[protein] + a quinol. Part of the MsrPQ system that repairs oxidized periplasmic proteins containing methionine sulfoxide residues (Met-O), using respiratory chain electrons. Thus protects these proteins from oxidative-stress damage caused by reactive species of oxygen and chlorine generated by the host defense mechanisms. MsrPQ is essential for the maintenance of envelope integrity under bleach stress, rescuing a wide series of structurally unrelated periplasmic proteins from methionine oxidation, including the primary periplasmic chaperone SurA and the lipoprotein Pal. The catalytic subunit MsrP is non-stereospecific, being able to reduce both (R-) and (S-) diastereoisomers of methionine sulfoxide. The sequence is that of Protein-methionine-sulfoxide reductase catalytic subunit MsrP from Escherichia coli O127:H6 (strain E2348/69 / EPEC).